A 216-amino-acid chain; its full sequence is DNA-binding protein HupB (216 aa).

A propeptide (removed; alternate) is located at residue G2. M3 bears the N-acetylmethionine mark. Residues 3-92 are bacterial histone-like domain; that stretch reads MNKAELIDVL…PGAQFKAVVS (90 aa). 6 positions are modified to N6-acetyllysine: K5, K74, K88, K105, K118, and K135. Positions 102 to 216 are disordered; the sequence is PAVKRGVGAS…KKATARRGRK (115 aa). Residues 103 to 216 form a degenerate repeats region region; it reads AVKRGVGASA…KKATARRGRK (114 aa). The span at 104 to 114 shows a compositional bias: low complexity; that stretch reads VKRGVGASAAK. Positions 115–216 are enriched in basic residues; that stretch reads KVAKKAPAKK…KKATARRGRK (102 aa). N6,N6,N6-trimethyllysine is present on K140. N6-acetyllysine occurs at positions 148 and 169.

It belongs to the bacterial histone-like protein family. Long actinobacterial subfamily. In terms of assembly, oligomerizes. Interacts with topoisomerase 1 (topA). Interacts with Eis. Interacts with antigen 85 proteins (fbpA, fbpB, fbpC). Post-translationally, probably acetylated by Eis in vivo. In vitro acetylated by Eis (strain H37Rv and H37Ra) on many more residues than those identified in vivo. Deacetylated in vitro by NAD-dependent protein deacylase (Rv1151c). In terms of processing, trimethylated on Lys-140 by human SUV39H1; trimethylation inhibits mycobacterial growth. SUV39H1 probably also trimethylates another residue. Probably succinylated by Rv0802c and desuccinylated by NAD-dependent protein deacylase (Rv1151c).

Its subcellular location is the cytoplasm. It localises to the nucleoid. The protein localises to the secreted. It is found in the cell wall. The catalysed reaction is 4 Fe(2+) + O2 + 4 H(+) = 4 Fe(3+) + 2 H2O. Its function is as follows. A nucleoid-associated protein (NAP) that probably plays a role in chromosome compactation. Binds DNA non-specifically, with greater affinity for supercoiled than linear DNA, binds well to nicked DNA, gapped and cruciform DNA. Has a preference for A:T rich DNA. Required for activation of the mtbB operon. Binds the mtbB promoter in the presence of iron, binding is seen with as little as 25 uM Fe(2+) and increases with increasing Fe(2+). RNase E and HupB jointly contribute to cellular adaptation to changing growth conditions and survival during antibiotic treatment and in the host. Plays a role in stress survival. Stimulates supercoiling relaxation by topoisomerase 1 (Top1, topA). In terms of biological role, binds Fe(3+) but not Fe(2+). Has ferroxidase activity, converts Fe(2+) into Fe(3+) and in the presence of H(2)O(2) prevents the generation of hydroxyl radicals (the Fenton reaction). Protects DNA from damage in the presence of FeSO(4) and H(2)O(2). May function in iron storage. Involved in iron uptake by bacteria (either Fe(3+) or extracellular carboxymycobactin); antibodies against HupB block uptake of both. Following uptake iron is mostly found in the iron siderophores carboxymycobactin (CMb, extracellular) or mycobactin (Mb, lipophilic). Facilitates transfer of iron from CMb to Mb when liposomes plus a cell wall lysate are incubated with CMb. Binds iron, ferri-CMb and ferri-Mb; has 10-fold higher affinity for ferri-Mb. Suggested to transfer iron from CBm to Mb at the cell membrane. Functionally, required for biofilm formation; trimethylation by recombinant human SUV39H1 (a histone methyltransferase) inhibits biofilm formation. Induces lymphoproliferation, particularly in health tuberculin reactors, and is immunogenic. Maybe involved in pathogenesis of inflammatory bowel disease (IBD) in patients with ulcerative colitis and Crohn disease (CD). Bound by anti-neutrophil cytoplasmic antibodies (pANCA), which are a hallmark of IBD. The binding is due to pANCA directed against H1-3 cross-reacting with DBH epitopes. In CD, target of a strong IgA response. May play a role in cell wall assembly. In vitro at low levels enhances formation of TMM and TDM by antigen 85 proteins (fbpA, fbpB, fbpC), at higher levels inhibits TMM and TDM formation. This is DNA-binding protein HupB from Mycobacterium tuberculosis (strain ATCC 25618 / H37Rv).